Here is a 419-residue protein sequence, read N- to C-terminus: Putative zinc metalloprotease spyM18_2031 (419 aa).

Histidine 18 lines the Zn(2+) pocket. Glutamate 19 is a catalytic residue. Histidine 22 is a Zn(2+) binding site. Transmembrane regions (helical) follow at residues leucine 169–valine 191, leucine 301–asparagine 323, leucine 343–isoleucine 365, and alanine 392–tryptophan 411. The region spanning glycine 175–lysine 274 is the PDZ domain.

Belongs to the peptidase M50B family. Zn(2+) serves as cofactor.

Its subcellular location is the cell membrane. This chain is Putative zinc metalloprotease spyM18_2031, found in Streptococcus pyogenes serotype M18 (strain MGAS8232).